Here is a 314-residue protein sequence, read N- to C-terminus: 2,3-dihydroxyphenylpropionate/2,3-dihydroxicinnamic acid 1,2-dioxygenase (314 aa).

His-115 (proton donor) is an active-site residue. His-179 acts as the Proton acceptor in catalysis.

The protein belongs to the LigB/MhpB extradiol dioxygenase family. In terms of assembly, homotetramer. Fe(2+) serves as cofactor.

It catalyses the reaction 3-(2,3-dihydroxyphenyl)propanoate + O2 = (2Z,4E)-2-hydroxy-6-oxonona-2,4-dienedioate + H(+). The catalysed reaction is (2E)-3-(2,3-dihydroxyphenyl)prop-2-enoate + O2 = (2Z,4E,7E)-2-hydroxy-6-oxonona-2,4,7-trienedioate + H(+). It functions in the pathway aromatic compound metabolism; 3-phenylpropanoate degradation. Catalyzes the non-heme iron(II)-dependent oxidative cleavage of 2,3-dihydroxyphenylpropionic acid and 2,3-dihydroxicinnamic acid into 2-hydroxy-6-ketononadienedioate and 2-hydroxy-6-ketononatrienedioate, respectively. The polypeptide is 2,3-dihydroxyphenylpropionate/2,3-dihydroxicinnamic acid 1,2-dioxygenase (Escherichia coli (strain 55989 / EAEC)).